The primary structure comprises 999 residues: Transcription-repair-coupling factor (999 aa).

Positions 499-656 constitute a Helicase ATP-binding domain; that stretch reads DLSSHRVMDR…LSQIKGISSL (158 aa). 512–519 lines the ATP pocket; sequence GDVGFGKT. The DEEH box signature appears at 609–612; sequence DEEH. The Helicase C-terminal domain maps to 677–833; the sequence is LLKEIIYREL…SVAYHDLEIR (157 aa).

The protein in the N-terminal section; belongs to the UvrB family. It in the C-terminal section; belongs to the helicase family. RecG subfamily.

Its subcellular location is the cytoplasm. Couples transcription and DNA repair by recognizing RNA polymerase (RNAP) stalled at DNA lesions. Mediates ATP-dependent release of RNAP and its truncated transcript from the DNA, and recruitment of nucleotide excision repair machinery to the damaged site. In Helicobacter pylori (strain ATCC 700392 / 26695) (Campylobacter pylori), this protein is Transcription-repair-coupling factor.